A 444-amino-acid chain; its full sequence is Jacalin-related lectin 11 (444 aa).

Alanine 2 is subject to N-acetylalanine. Jacalin-type lectin domains lie at 2-143 (ALKV…YFIK), 146-290 (SIQS…YYAP), and 298-442 (PEKL…HVTA).

This sequence belongs to the jacalin lectin family.

This is Jacalin-related lectin 11 (JAL11) from Arabidopsis thaliana (Mouse-ear cress).